A 413-amino-acid polypeptide reads, in one-letter code: NAD(P)H oxidoreductase RTN4IP1, mitochondrial (413 aa).

Residues 1-23 (MTAAGFNSILCLRQLVRLNRRQY) constitute a mitochondrion transit peptide. The segment at 27–52 (AKSVLSGSQTNDQATPPPTSKSADKM) is disordered. The span at 31-40 (LSGSQTNDQA) shows a compositional bias: polar residues. The Enoyl reductase (ER) domain occupies 61–405 (GDIDELQLSE…SGHLRGKIVV (345 aa)). Residues Ser-228, Gly-230, Val-231, Ser-251, Tyr-269, Gly-353, Phe-355, His-398, and Arg-400 each coordinate NADPH.

It belongs to the zinc-containing alcohol dehydrogenase family. Quinone oxidoreductase subfamily.

Its subcellular location is the mitochondrion matrix. It catalyses the reaction a quinone + NADH + H(+) = a quinol + NAD(+). The enzyme catalyses a quinone + NADPH + H(+) = a quinol + NADP(+). The protein operates within cofactor biosynthesis; ubiquinone biosynthesis. Its function is as follows. NAD(P)H oxidoreductase. Involved in the ubiquinone biosynthetic pathway. In Drosophila melanogaster (Fruit fly), this protein is NAD(P)H oxidoreductase RTN4IP1, mitochondrial.